The following is a 359-amino-acid chain: Molybdenum import ATP-binding protein ModC (359 aa).

The ABC transporter domain maps to 1-229 (MLELNFSQQL…SALRPWLQRE (229 aa)). 31–38 (GLSGAGKT) contributes to the ATP binding site. Residues 289-354 (SSSIRNILPV…IKSVSFNRQN (66 aa)) form the Mop domain.

The protein belongs to the ABC transporter superfamily. Molybdate importer (TC 3.A.1.8) family. The complex is composed of two ATP-binding proteins (ModC), two transmembrane proteins (ModB) and a solute-binding protein (ModA).

The protein resides in the cell inner membrane. The catalysed reaction is molybdate(out) + ATP + H2O = molybdate(in) + ADP + phosphate + H(+). Part of the ABC transporter complex ModABC involved in molybdenum import. Responsible for energy coupling to the transport system. This chain is Molybdenum import ATP-binding protein ModC, found in Yersinia pestis bv. Antiqua (strain Antiqua).